Reading from the N-terminus, the 378-residue chain is MAVKVLVVDDSGFFRRRVSEILSADPSIQVVGTATNGKEAIDQALALKPDVITMDYEMPMMDGITAVRHIMQRCPTPVLMFSSLTHEGARVTLDALDAGAVDFLPKNFEDISRNPEKVKQLLCEKVHSISRSNRRFSAYSAPAPAAAPTPAPIPAAAPSSFGSHSAPARPAPAPAPTRAPAASASSPAPKRKNYKLVAIGTSTGGPVALQRVLTQLPASFPAPIVLIQHMPAAFTKAFAERLDKLCRISVKEAEDGDILRPGLALLAPGGKQMMIDGRGAVKILPGDERLNYKPCVDITFGSAAKSYSDKVLAVVLTGMGADGREGARLLKQGGSTVWAQDEASCVIYGMPMAIVKADLADAVYSLDDIGKHIVEACV.

Positions 4–121 constitute a Response regulatory domain; sequence KVLVVDDSGF…SRNPEKVKQL (118 aa). Aspartate 55 carries the post-translational modification 4-aspartylphosphate. Residues 141-188 form a disordered region; sequence APAPAAAPTPAPIPAAAPSSFGSHSAPARPAPAPAPTRAPAASASSPA. Pro residues predominate over residues 145-155; sequence AAAPTPAPIPA. 2 stretches are compositionally biased toward low complexity: residues 156–168 and 178–188; these read AAPS…SAPA and RAPAASASSPA. Positions 187-378 constitute a CheB-type methylesterase domain; the sequence is PAPKRKNYKL…IGKHIVEACV (192 aa). Residues serine 202, histidine 229, and aspartate 322 contribute to the active site.

It belongs to the CheB family. Post-translationally, phosphorylated by CheA. Phosphorylation of the N-terminal regulatory domain activates the methylesterase activity.

The protein resides in the cytoplasm. It carries out the reaction [protein]-L-glutamate 5-O-methyl ester + H2O = L-glutamyl-[protein] + methanol + H(+). The enzyme catalyses L-glutaminyl-[protein] + H2O = L-glutamyl-[protein] + NH4(+). In terms of biological role, involved in chemotaxis. Part of a chemotaxis signal transduction system that modulates chemotaxis in response to various stimuli. Catalyzes the demethylation of specific methylglutamate residues introduced into the chemoreceptors (methyl-accepting chemotaxis proteins or MCP) by CheR. Also mediates the irreversible deamidation of specific glutamine residues to glutamic acid. This is Protein-glutamate methylesterase/protein-glutamine glutaminase 2 from Pseudomonas fluorescens (strain Pf0-1).